Consider the following 97-residue polypeptide: UPF0235 protein Daro_3887 (97 aa).

Belongs to the UPF0235 family.

The polypeptide is UPF0235 protein Daro_3887 (Dechloromonas aromatica (strain RCB)).